The sequence spans 139 residues: Serpin-like protein HMSD (139 aa).

The signal sequence occupies residues 1 to 20 (MSISSALAMVFMGAKGNTAA). N-linked (GlcNAc...) asparagine glycosylation occurs at Asn50.

Belongs to the serpin family. In terms of tissue distribution, highly expressed in dendritic cells and primary leukemia cells, especially those of myeloid lineage.

The protein resides in the secreted. Functionally, putative serine protease inhibitor. This Homo sapiens (Human) protein is Serpin-like protein HMSD (HMSD).